Reading from the N-terminus, the 315-residue chain is Lipoyl synthase (315 aa).

[4Fe-4S] cluster-binding residues include C62, C67, C73, C88, C92, C95, and S302. The Radical SAM core domain occupies 74–291; it reads FNHGAATFMI…KKIALKLGFS (218 aa).

It belongs to the radical SAM superfamily. Lipoyl synthase family. [4Fe-4S] cluster serves as cofactor.

It is found in the cytoplasm. It carries out the reaction [[Fe-S] cluster scaffold protein carrying a second [4Fe-4S](2+) cluster] + N(6)-octanoyl-L-lysyl-[protein] + 2 oxidized [2Fe-2S]-[ferredoxin] + 2 S-adenosyl-L-methionine + 4 H(+) = [[Fe-S] cluster scaffold protein] + N(6)-[(R)-dihydrolipoyl]-L-lysyl-[protein] + 4 Fe(3+) + 2 hydrogen sulfide + 2 5'-deoxyadenosine + 2 L-methionine + 2 reduced [2Fe-2S]-[ferredoxin]. It participates in protein modification; protein lipoylation via endogenous pathway; protein N(6)-(lipoyl)lysine from octanoyl-[acyl-carrier-protein]: step 2/2. Functionally, catalyzes the radical-mediated insertion of two sulfur atoms into the C-6 and C-8 positions of the octanoyl moiety bound to the lipoyl domains of lipoate-dependent enzymes, thereby converting the octanoylated domains into lipoylated derivatives. The chain is Lipoyl synthase from Ruthia magnifica subsp. Calyptogena magnifica.